Consider the following 427-residue polypeptide: Phosphoribosylamine--glycine ligase (427 aa).

The ATP-grasp domain occupies 109–313; that stretch reads RNLMAEYKIE…LAEVVTGITE (205 aa). 136 to 191 provides a ligand contact to ATP; it reads VRDHDGDLAVKPIGLTGGKGVRIMGEQVDRAGAIEYIREINGGVVLEERLTGEEFT. Positions 271, 283, and 285 each coordinate Mg(2+). Q271, E283, and N285 together coordinate Mn(2+).

It belongs to the GARS family. Mg(2+) serves as cofactor. It depends on Mn(2+) as a cofactor.

The catalysed reaction is 5-phospho-beta-D-ribosylamine + glycine + ATP = N(1)-(5-phospho-beta-D-ribosyl)glycinamide + ADP + phosphate + H(+). Its pathway is purine metabolism; IMP biosynthesis via de novo pathway; N(1)-(5-phospho-D-ribosyl)glycinamide from 5-phospho-alpha-D-ribose 1-diphosphate: step 2/2. This Methanoregula boonei (strain DSM 21154 / JCM 14090 / 6A8) protein is Phosphoribosylamine--glycine ligase.